Reading from the N-terminus, the 415-residue chain is Teichoic acid D-alanyltransferase (415 aa).

Topologically, residues Met-1 to Asn-16 are extracellular. A helical membrane pass occupies residues Pro-17–Phe-36. Residues Lys-37–Phe-40 lie on the Cytoplasmic side of the membrane. A helical transmembrane segment spans residues Ala-41–Leu-56. Over Thr-57–His-60 the chain is Extracellular. The helical transmembrane segment at Ala-61–Gln-87 threads the bilayer. Over Arg-88–Asn-90 the chain is Cytoplasmic. The helical transmembrane segment at Lys-91–Asn-115 threads the bilayer. The Extracellular portion of the chain corresponds to Gly-116–Gly-125. Residues Ile-126–Asp-142 traverse the membrane as a helical segment. At Gly-143 to Thr-149 the chain is on the cytoplasmic side. The stretch at Leu-150–Gln-179 is an intramembrane region. Topologically, residues Ser-180–Asn-183 are cytoplasmic. Residues Arg-184–Gln-227 form a helical membrane-spanning segment. The Extracellular portion of the chain corresponds to Gly-228–Asn-232. A helical transmembrane segment spans residues Leu-233–Met-264. Residues Gly-265 to Lys-274 lie on the Cytoplasmic side of the membrane. The stretch at Pro-275–Asn-311 is an intramembrane region. At Lys-312–Asn-316 the chain is on the cytoplasmic side. A helical membrane pass occupies residues Arg-317–His-336. Residue His-336 is part of the active site. Over Gly-337–Thr-339 the chain is Extracellular. Residues Trp-340–Ala-373 form a helical membrane-spanning segment. The Cytoplasmic portion of the chain corresponds to Gly-374–Asn-381. A helical transmembrane segment spans residues Lys-382–Ser-404. Residues Gly-405–Lys-415 are Extracellular-facing.

The protein belongs to the membrane-bound acyltransferase family.

The protein localises to the cell membrane. It participates in cell wall biogenesis; lipoteichoic acid biosynthesis. Functionally, O-acyltransferase that catalyzes D-alanylation of both teichoic acid and lipoteichoic acid (LTA). D-alanylation of LTA plays an important role in modulating the properties of the cell wall in Gram-positive bacteria, influencing the net charge of the cell wall. Catalyzes D-alanylation from DltC carrier protein. In Streptococcus thermophilus (strain ATCC BAA-250 / LMG 18311), this protein is Teichoic acid D-alanyltransferase.